A 222-amino-acid chain; its full sequence is UPF0502 protein SO_1867 (222 aa).

A compositionally biased stretch (polar residues) spans 169-193 (EQVSATSLSADSPSADSNSLNAQDR). Residues 169–195 (EQVSATSLSADSPSADSNSLNAQDRQQ) are disordered.

The protein belongs to the UPF0502 family.

This chain is UPF0502 protein SO_1867, found in Shewanella oneidensis (strain ATCC 700550 / JCM 31522 / CIP 106686 / LMG 19005 / NCIMB 14063 / MR-1).